Reading from the N-terminus, the 129-residue chain is Glycine cleavage system H protein (129 aa).

The Lipoyl-binding domain occupies 24–106 (TYTVGITEHA…YTDGWIFKIK (83 aa)). Residue Lys-65 is modified to N6-lipoyllysine.

It belongs to the GcvH family. The glycine cleavage system is composed of four proteins: P, T, L and H. It depends on (R)-lipoate as a cofactor.

The glycine cleavage system catalyzes the degradation of glycine. The H protein shuttles the methylamine group of glycine from the P protein to the T protein. This chain is Glycine cleavage system H protein, found in Klebsiella pneumoniae subsp. pneumoniae (strain ATCC 700721 / MGH 78578).